The following is a 34-amino-acid chain: Hemopexin (34 aa).

The tract at residues 1-25 is disordered; it reads RPLTQHKPHTPGDEHPHGAEPPGXD.

The protein belongs to the hemopexin family. As to expression, expressed by the liver and secreted in plasma.

Its subcellular location is the secreted. Functionally, binds heme and transports it to the liver for breakdown and iron recovery, after which the free hemopexin returns to the circulation. The polypeptide is Hemopexin (HPX) (Gallus gallus (Chicken)).